A 178-amino-acid polypeptide reads, in one-letter code: Ribosome maturation factor RimP (178 aa).

This sequence belongs to the RimP family.

Its subcellular location is the cytoplasm. Functionally, required for maturation of 30S ribosomal subunits. The chain is Ribosome maturation factor RimP from Corynebacterium glutamicum (strain ATCC 13032 / DSM 20300 / JCM 1318 / BCRC 11384 / CCUG 27702 / LMG 3730 / NBRC 12168 / NCIMB 10025 / NRRL B-2784 / 534).